A 335-amino-acid chain; its full sequence is Mesoderm-specific transcript protein (335 aa).

Helical transmembrane passes span 13–33 and 63–83; these read WWVQVGLLAVPLLAAYLHIPP and VGVVGSPEIVVLLHGFPTSSY. The region spanning 71 to 310 is the AB hydrolase-1 domain; the sequence is IVVLLHGFPT…PRSTVSILDD (240 aa). An RVIALD motif is present at residues 98–103; the sequence is RVIALD. N-linked (GlcNAc...) asparagine glycosylation occurs at asparagine 163. A helical membrane pass occupies residues 266–286; it reads VGALASVSIPIHFIYGPLDPI.

It belongs to the AB hydrolase superfamily. Expressed in mesodermal tissues. Isoform 1 is exclusively expressed from the paternal allele in all fetal tissues and cell lines examined, whereas isoform 2 is preferentially expressed from the paternal allele in a tissue-type-specific manner.

Its subcellular location is the endoplasmic reticulum membrane. This is Mesoderm-specific transcript protein (Mest) from Mus musculus (Mouse).